A 582-amino-acid chain; its full sequence is Putative BTB/POZ domain-containing protein At3g08660 (582 aa).

The tract at residues 1-21 (MGSDSTLSLPSSSPPCNNRSS) is disordered. The BTB domain maps to 36–103 (GDIIVVVDGE…CYGINFDITA (68 aa)). An NPH3 domain is found at 196–466 (EMWTEELSAL…VRVLYTEQLR (271 aa)). Tyrosine 407 is modified (phosphotyrosine). The tract at residues 558-582 (GGETRQKVNRKSRSVSERKSSRSGR) is disordered. The span at 571-582 (SVSERKSSRSGR) shows a compositional bias: basic and acidic residues.

This sequence belongs to the NPH3 family.

The protein operates within protein modification; protein ubiquitination. Functionally, may act as a substrate-specific adapter of an E3 ubiquitin-protein ligase complex (CUL3-RBX1-BTB) which mediates the ubiquitination and subsequent proteasomal degradation of target proteins. This Arabidopsis thaliana (Mouse-ear cress) protein is Putative BTB/POZ domain-containing protein At3g08660.